The chain runs to 155 residues: Protein archease-like (155 aa).

Residues aspartate 26, aspartate 154, and isoleucine 155 each contribute to the Ca(2+) site.

This sequence belongs to the archease family.

Functionally, component of the tRNA-splicing ligase complex required to facilitate the enzymatic turnover of catalytic subunit RtcB. The protein is Protein archease-like of Caenorhabditis briggsae.